A 102-amino-acid polypeptide reads, in one-letter code: Large ribosomal subunit protein mL63 (102 aa).

The protein belongs to the mitochondrion-specific ribosomal protein mL63 family.

It localises to the mitochondrion. In Mus musculus (Mouse), this protein is Large ribosomal subunit protein mL63 (Mrpl57).